The chain runs to 183 residues: Large ribosomal subunit protein eL18 (183 aa).

Residues 151–183 (HFGPAPGAPRSHTKPYVRSKGHEQAKPSRRSNV) are disordered.

The protein belongs to the eukaryotic ribosomal protein eL18 family.

It is found in the cytoplasm. The protein is Large ribosomal subunit protein eL18 (RpL18) of Plutella xylostella (Diamondback moth).